We begin with the raw amino-acid sequence, 420 residues long: C-methyltransferase NovU (420 aa).

The protein belongs to the methyltransferase superfamily.

Its pathway is antibiotic biosynthesis; novobiocin biosynthesis. Its function is as follows. C-methyltransferase that acts together with NovW to catalyze the formation of dTDP-4-keto-6-deoxy-5-C-methyl-L-lyxo-hexose from dTDP-4-keto-6-deoxy-D-glucose in the novobiocin biosynthesis pathway, an aminocoumarin family antibiotic that targets bacterial DNA gyrases. The sequence is that of C-methyltransferase NovU (novU) from Streptomyces niveus (Streptomyces spheroides).